A 321-amino-acid polypeptide reads, in one-letter code: Nucleus-vacuole junction protein 1 (321 aa).

Positions 1 to 22 are cleaved as a signal peptide; the sequence is MTRPPLVRGIFSLGLSVAVLKG. Positions 73-125 are TSC13-binding; the sequence is ELSWRKVFNFISRQSSELDTRIYVLILLLSFLLPIAWTVLDGDRETTLEDKDN. A helical membrane pass occupies residues 94 to 114; sequence IYVLILLLSFLLPIAWTVLDG. The interval 139–195 is OSH1-binding; the sequence is KHYNDGERAVLQFGKNRSEPIILSYKDMNVLEGEHEFTSKEEHSNSHLTSKSENALN. 2 positions are modified to phosphoserine: serine 156 and serine 199. The segment at 211–275 is disordered; the sequence is LEEDKNEPNG…SLKSSTSFPI (65 aa). Residues 233–321 are VAC8-binding; that stretch reads DCSSSSEVES…EQAYSQPFRY (89 aa). A compositionally biased stretch (basic and acidic residues) spans 242 to 262; the sequence is SQSKCRKESTAEPDSLSRDTR. Residues 263–272 show a composition bias toward low complexity; that stretch reads TTSSLKSSTS. Residues serine 285 and serine 298 each carry the phosphoserine modification. The segment at 299 to 321 is disordered; it reads PTKSSNLDAQVNTEQAYSQPFRY.

In terms of assembly, interacts with OSH1, TSC13 and VAC8.

The protein resides in the nucleus outer membrane. Functionally, involved in the formation of nucleus-vacuole junctions (NVJs) during piecemeal microautophagy of the nucleus (PMN). NVJs are interorganelle interfaces mediated by NVJ1 in the nuclear envelope and VAC8 on the vacuole membrane. Together, NVJ1 and VAC8 form Velcro-like patches through which teardrop-like portions of the nucleus are pinched off into the vacuolar lumen and degraded by the PMN process. Also acts as an outer-nuclear membrane receptor for OSH1 and TSC13. The polypeptide is Nucleus-vacuole junction protein 1 (NVJ1) (Saccharomyces cerevisiae (strain ATCC 204508 / S288c) (Baker's yeast)).